Reading from the N-terminus, the 206-residue chain is Large ribosomal subunit protein uL3 (206 aa).

A disordered region spans residues 127 to 151 (SGGPSSHGSKFHRHLGGTGQATTPA).

The protein belongs to the universal ribosomal protein uL3 family. Part of the 50S ribosomal subunit. Forms a cluster with proteins L14 and L19.

One of the primary rRNA binding proteins, it binds directly near the 3'-end of the 23S rRNA, where it nucleates assembly of the 50S subunit. The chain is Large ribosomal subunit protein uL3 from Borreliella burgdorferi (strain ATCC 35210 / DSM 4680 / CIP 102532 / B31) (Borrelia burgdorferi).